The following is a 238-amino-acid chain: 1-(5-phosphoribosyl)-5-[(5-phosphoribosylamino)methylideneamino] imidazole-4-carboxamide isomerase (238 aa).

The active-site Proton acceptor is D8. The active-site Proton donor is the D129.

This sequence belongs to the HisA/HisF family.

The protein resides in the cytoplasm. The catalysed reaction is 1-(5-phospho-beta-D-ribosyl)-5-[(5-phospho-beta-D-ribosylamino)methylideneamino]imidazole-4-carboxamide = 5-[(5-phospho-1-deoxy-D-ribulos-1-ylimino)methylamino]-1-(5-phospho-beta-D-ribosyl)imidazole-4-carboxamide. The protein operates within amino-acid biosynthesis; L-histidine biosynthesis; L-histidine from 5-phospho-alpha-D-ribose 1-diphosphate: step 4/9. This is 1-(5-phosphoribosyl)-5-[(5-phosphoribosylamino)methylideneamino] imidazole-4-carboxamide isomerase from Paracoccus denitrificans (strain Pd 1222).